The sequence spans 59 residues: Salivary thrombin inhibitor XC-43 (59 aa).

A signal peptide spans 1 to 23 (MNLQFLFIFIAFCVMLFAQIVTA).

As to quaternary structure, interacts with human F2 (thrombin). As to expression, salivary gland (at protein level).

It is found in the secreted. Anticoagulant protein that acts as a competitive inhibitor of host thrombin. Inhibits thrombin-mediated host platelet aggregation. This Xenopsylla cheopis (Oriental rat flea) protein is Salivary thrombin inhibitor XC-43.